The following is a 344-amino-acid chain: Protein pelota homolog (344 aa).

This sequence belongs to the eukaryotic release factor 1 family. Pelota subfamily. As to quaternary structure, monomer. A divalent metal cation serves as cofactor.

The protein localises to the cytoplasm. Functionally, may function in recognizing stalled ribosomes, interact with stem-loop structures in stalled mRNA molecules, and effect endonucleolytic cleavage of the mRNA. May play a role in the release non-functional ribosomes and degradation of damaged mRNAs. Has endoribonuclease activity. The sequence is that of Protein pelota homolog from Archaeoglobus fulgidus (strain ATCC 49558 / DSM 4304 / JCM 9628 / NBRC 100126 / VC-16).